The following is a 337-amino-acid chain: o-succinylbenzoate synthase (337 aa).

The Proton donor role is filled by lysine 142. The Mg(2+) site is built by aspartate 170, glutamate 199, and aspartate 222. The active-site Proton acceptor is lysine 248.

It belongs to the mandelate racemase/muconate lactonizing enzyme family. MenC type 1 subfamily. Requires a divalent metal cation as cofactor.

The enzyme catalyses (1R,6R)-6-hydroxy-2-succinyl-cyclohexa-2,4-diene-1-carboxylate = 2-succinylbenzoate + H2O. Its pathway is quinol/quinone metabolism; 1,4-dihydroxy-2-naphthoate biosynthesis; 1,4-dihydroxy-2-naphthoate from chorismate: step 4/7. It functions in the pathway quinol/quinone metabolism; menaquinone biosynthesis. Its function is as follows. Converts 2-succinyl-6-hydroxy-2,4-cyclohexadiene-1-carboxylate (SHCHC) to 2-succinylbenzoate (OSB). The chain is o-succinylbenzoate synthase from Pasteurella multocida (strain Pm70).